Reading from the N-terminus, the 195-residue chain is Putative lysine exporter (195 aa).

Helical transmembrane passes span 4–24 (LLSAVIIGIVLGWLCKDWLHF), 30–50 (LYVLITLIFFVGIQLRNNGIS), 61–81 (LMMGAIFTLSSLIGGVISAFF), 86–106 (ITQGLAFSSGFGWYSLSSVVL), 117–137 (IAFFNDLSREILSLFLIPLFM), and 170–190 (PIAISFGMVTNLLPPLLLVFF).

This sequence belongs to the LysO family.

The protein resides in the cell inner membrane. Mediates export of lysine. The polypeptide is Putative lysine exporter (Haemophilus influenzae (strain ATCC 51907 / DSM 11121 / KW20 / Rd)).